The following is a 400-amino-acid chain: Jasmonate-induced oxygenase 1 (400 aa).

One can recognise a Fe2OG dioxygenase domain in the interval 248 to 349 (DVGACLRVNY…RVSLAFFYNP (102 aa)). Arg-254 serves as a coordination point for jasmonate. 2-oxoglutarate is bound by residues Asn-256 and Tyr-258. Positions 273, 275, and 330 each coordinate Fe cation. The 2-oxoglutarate site is built by Arg-340 and Ser-342. Jasmonate is bound by residues Arg-379 and Arg-383.

The protein belongs to the iron/ascorbate-dependent oxidoreductase family. L-ascorbate serves as cofactor. The cofactor is Fe(2+).

The catalysed reaction is jasmonate + 2-oxoglutarate + O2 = (1R,2R)-12-hydroxyjasmonate + succinate + CO2. In terms of biological role, 2-oxoglutarate-dependent dioxygenase involved in the oxidation of jasmonate (JA), a stress-induced phytohormone synthesized in response to attack by pathogens and herbivores, which triggers the activation of defense responses via the JA-mediated signaling pathway. Converts JA to 12-hydroxyjasmonate (12OH-JA), an inactive form of JA. Prevents over-accumulation of JA and indirectly its bioactive form JA-Ile under stress response. Acts as a negative regulator of JA-mediated defense signaling, by contributing to 12OH-JA accumulation, which represses JA defense responses upon infection by the fungal pathogen Botrytis cinerea and the herbivorous caterpillar Mamestra brassicae. In Arabidopsis thaliana (Mouse-ear cress), this protein is Jasmonate-induced oxygenase 1.